The sequence spans 548 residues: Medium/long-chain-fatty-acid--CoA/3-oxocholest-4-en-26-oate--CoA ligase (548 aa).

ATP contacts are provided by residues 174–182, Asp415, Arg430, and Lys521; that span reads TGGTTGFPK. Residues 520–541 are compositionally biased toward basic and acidic residues; that stretch reads GKPDYRWAKEQTEARPADDVHA. The disordered stretch occupies residues 520-548; it reads GKPDYRWAKEQTEARPADDVHAGHVTSGG.

Belongs to the ATP-dependent AMP-binding enzyme family.

The catalysed reaction is a medium-chain fatty acid + ATP + CoA = a medium-chain fatty acyl-CoA + AMP + diphosphate. The enzyme catalyses a long-chain fatty acid + ATP + CoA = a long-chain fatty acyl-CoA + AMP + diphosphate. It catalyses the reaction (25S)-3-oxocholest-4-en-26-oate + ATP + CoA = (25S)-3-oxocholest-4-en-26-oyl-CoA + AMP + diphosphate. The protein operates within lipid metabolism; fatty acid biosynthesis. It participates in steroid metabolism; cholesterol metabolism. Functionally, catalyzes the activation of medium/long-chain fatty acids as acyl-coenzyme A (acyl-CoA), which are then transferred to the multifunctional polyketide synthase (PKS) type III for further chain extension. Also involved in the degradation of cholesterol via the degradation of the side chains of C-24 branched-chain sterols. Catalyzes the ATP-dependent CoA thioesterification of the sterol 3-oxocholest-4-en-26-oate to yield 3-oxocholest-4-en-26-oyl-CoA. The chain is Medium/long-chain-fatty-acid--CoA/3-oxocholest-4-en-26-oate--CoA ligase from Mycobacterium bovis (strain ATCC BAA-935 / AF2122/97).